The following is a 291-amino-acid chain: Ribosomal protein L11 methyltransferase (291 aa).

S-adenosyl-L-methionine contacts are provided by Thr-136, Gly-159, Asp-181, and Asn-228.

Belongs to the methyltransferase superfamily. PrmA family.

The protein resides in the cytoplasm. It catalyses the reaction L-lysyl-[protein] + 3 S-adenosyl-L-methionine = N(6),N(6),N(6)-trimethyl-L-lysyl-[protein] + 3 S-adenosyl-L-homocysteine + 3 H(+). Its function is as follows. Methylates ribosomal protein L11. This Rhizobium meliloti (strain 1021) (Ensifer meliloti) protein is Ribosomal protein L11 methyltransferase.